The chain runs to 88 residues: MLKLICIAFLVTVLTLVAGEDSLDPAEYGCADDINQEDLLKKNDVCLQCEDLHKEGVVFSLCKTNCFTTQYFTNCVKDLEEAEKEPPE.

Positions methionine 1 to glycine 19 are cleaved as a signal peptide. Intrachain disulfides connect cysteine 30-cysteine 66, cysteine 46-cysteine 62, and cysteine 49-cysteine 75.

It belongs to the arthropod CHH/MIH/GIH/VIH hormone family. In terms of tissue distribution, expressed by the venom gland.

It is found in the secreted. In terms of biological role, may increase the toxicity of alpha-latrotoxin and/or other venom components. Is non-toxic to mice and to the cockroach Periplaneta americana. The polypeptide is Alpha-latrotoxin associated low molecular weight protein 2 (Latrodectus hesperus (Western black widow spider)).